Here is a 64-residue protein sequence, read N- to C-terminus: Large ribosomal subunit protein bL35 (64 aa).

It belongs to the bacterial ribosomal protein bL35 family.

The protein is Large ribosomal subunit protein bL35 of Streptomyces avermitilis (strain ATCC 31267 / DSM 46492 / JCM 5070 / NBRC 14893 / NCIMB 12804 / NRRL 8165 / MA-4680).